Consider the following 255-residue polypeptide: Putative deoxyribonuclease tatdn3-B (255 aa).

Zn(2+) contacts are provided by histidine 11, histidine 13, glutamate 106, histidine 129, histidine 152, and aspartate 199.

Belongs to the metallo-dependent hydrolases superfamily. TatD-type hydrolase family. Mn(2+) is required as a cofactor. Requires Ca(2+) as cofactor. The cofactor is Mg(2+). It depends on Zn(2+) as a cofactor.

It localises to the nucleus. The 3'-exonuclease activity is sensitive to the metal ion present in the active site, whereas the AP endodeoxyribonuclease activity is observed in a variety of divalent metal cofactors. 3'-exoxonuclease activity is suppressed in the presence of Ca(2+), Zn(2+) and Ni(2+). Exhibits 3'-exonuclease activities and apurinic/apyrimidinic (AP) endonuclease (in vitro). Show preferential AP endonuclease activity on double-stranded DNA substrates and 3'- exonuclease activity on single-stranded DNA. In Xenopus laevis (African clawed frog), this protein is Putative deoxyribonuclease tatdn3-B (tatdn3-b).